The primary structure comprises 68 residues: Gallinacin-10 (68 aa).

A signal peptide spans 1 to 19 (MKILCLLFAVLLFLFQAAP). Positions 20 to 25 (GSADPL) are excised as a propeptide. 3 disulfide bridges follow: cysteine 32-cysteine 61, cysteine 39-cysteine 54, and cysteine 44-cysteine 62.

Belongs to the beta-defensin family. In terms of tissue distribution, strong expression in the testis, liver, gall bladder and kidney. Also expressed in the ovary and male and female reproductive tracts. Expressed in the ovarian stroma and the theca and granulosa layers of the ovarian follicle.

The protein localises to the secreted. It localises to the cytoplasmic granule. Has bactericidal activity. The protein is Gallinacin-10 (GAL10) of Gallus gallus (Chicken).